A 288-amino-acid chain; its full sequence is Glucose-1-phosphate thymidylyltransferase (288 aa).

Mg(2+)-binding residues include Asp-108 and Asp-223.

It belongs to the glucose-1-phosphate thymidylyltransferase family. Homotetramer. The cofactor is Mg(2+).

The catalysed reaction is dTTP + alpha-D-glucose 1-phosphate + H(+) = dTDP-alpha-D-glucose + diphosphate. Functionally, catalyzes the formation of dTDP-glucose, from dTTP and glucose 1-phosphate, as well as its pyrophosphorolysis. This chain is Glucose-1-phosphate thymidylyltransferase (rmlA), found in Neisseria gonorrhoeae.